A 188-amino-acid polypeptide reads, in one-letter code: Photosystem I assembly protein Ycf4 (188 aa).

The next 2 helical transmembrane spans lie at 26 to 46 and 68 to 88; these read YFWAIAVSVGGTGFLLAGLSS and LVMGLYGIAAILLASYLWFVI.

Belongs to the Ycf4 family.

Its subcellular location is the cellular thylakoid membrane. In terms of biological role, seems to be required for the assembly of the photosystem I complex. The polypeptide is Photosystem I assembly protein Ycf4 (Synechococcus sp. (strain ATCC 27144 / PCC 6301 / SAUG 1402/1) (Anacystis nidulans)).